The following is an 810-amino-acid chain: Eukaryotic translation initiation factor 3 subunit C (810 aa).

The segment covering 1–11 (MSRFFATNYNY) has biased composition (polar residues). The disordered stretch occupies residues 1-98 (MSRFFATNYN…DSDESDEEDG (98 aa)). A compositionally biased stretch (low complexity) spans 12–33 (DETSSSSEEDLLSSSEELLSSS). Over residues 34–58 (EEGELSDDSLFNDESESESDFDSDD) the composition is skewed to acidic residues. The PCI domain maps to 605 to 780 (YHQHINLDLV…TYIVIEKGDE (176 aa)).

The protein belongs to the eIF-3 subunit C family. As to quaternary structure, component of the eukaryotic translation initiation factor 3 (eIF-3) complex.

It is found in the cytoplasm. In terms of biological role, component of the eukaryotic translation initiation factor 3 (eIF-3) complex, which is involved in protein synthesis of a specialized repertoire of mRNAs and, together with other initiation factors, stimulates binding of mRNA and methionyl-tRNAi to the 40S ribosome. The eIF-3 complex specifically targets and initiates translation of a subset of mRNAs involved in cell proliferation. The chain is Eukaryotic translation initiation factor 3 subunit C from Candida glabrata (strain ATCC 2001 / BCRC 20586 / JCM 3761 / NBRC 0622 / NRRL Y-65 / CBS 138) (Yeast).